The chain runs to 200 residues: UPF0329 protein ECU06_1670 (200 aa).

It belongs to the UPF0329 family.

This Encephalitozoon cuniculi (strain GB-M1) (Microsporidian parasite) protein is UPF0329 protein ECU06_1670.